The following is a 220-amino-acid chain: uncharacterized protein (220 aa).

This is an uncharacterized protein from Mycoplasma pneumoniae (strain ATCC 29342 / M129 / Subtype 1) (Mycoplasmoides pneumoniae).